The primary structure comprises 176 residues: Disulfide bond formation protein B (176 aa).

Residues 1 to 14 lie on the Cytoplasmic side of the membrane; it reads MLRFLNQCSQGRGA. Residues 15-31 form a helical membrane-spanning segment; that stretch reads WLLMAFTALALELTALW. Residues 32–49 lie on the Periplasmic side of the membrane; sequence FQHVMLLKPCVLCIYERC. Residues Cys-41 and Cys-44 are joined by a disulfide bond. The chain crosses the membrane as a helical span at residues 50-65; sequence ALFGVLGAALIGAIAP. The Cytoplasmic segment spans residues 66–71; that stretch reads KTPLRY. A helical membrane pass occupies residues 72–89; it reads VAMVIWLYSAFRGVQLTY. Topologically, residues 90-144 are periplasmic; that stretch reads EHTMLQLYPSPFATCDFMVRFPEWLPLDKWVPQVFVASGDCAERQWDFLGMEMPQ. An intrachain disulfide couples Cys-104 to Cys-130. Residues 145–163 traverse the membrane as a helical segment; it reads WLLGIFIAYLIVAVLVVIS. Topologically, residues 164–176 are cytoplasmic; that stretch reads QPFKAKKRDLFGR.

The protein belongs to the DsbB family.

The protein localises to the cell inner membrane. In terms of biological role, required for disulfide bond formation in some periplasmic proteins such as PhoA or OmpA. Acts by oxidizing the DsbA protein. This chain is Disulfide bond formation protein B, found in Shigella flexneri.